The chain runs to 1364 residues: Kinectin (1364 aa).

At 1-6 (MEFYES) the chain is on the cytoplasmic side. The chain crosses the membrane as a helical; Signal-anchor for type II membrane protein span at residues 7–29 (TYFIILIPSVVITVIFLFFWLFM). The Lumenal segment spans residues 30–1364 (KETLYDEVLA…KGREHYQLVE (1335 aa)). 4 stretches are compositionally biased toward basic and acidic residues: residues 46 to 56 (KFPPTKSDKKK), 73 to 86 (HESD…DFKL), 121 to 135 (QKAA…ESEG), and 170 to 179 (QKNDDQDTKT). A disordered region spans residues 46–207 (KFPPTKSDKK…VKQENVSGKK (162 aa)). N-linked (GlcNAc...) asparagine glycosylation is found at Asn202, Asn267, Asn623, Asn638, Asn704, Asn775, Asn976, Asn1061, Asn1088, and Asn1094. The stretch at 315–1085 (KASKAESAAA…VETRELLQKL (771 aa)) forms a coiled coil. Residues 1116 to 1306 (SGSEDIKVME…ASLEREIGKV (191 aa)) adopt a coiled-coil conformation.

The protein belongs to the kinectin family. As to quaternary structure, parallel homodimers formed between the membrane-bound and the cytosolic form, and also between 2 cytosolic forms. In terms of processing, both the membrane and cytoplasmic forms seem to be myristoylated.

The protein resides in the endoplasmic reticulum membrane. Receptor for kinesin thus involved in kinesin-driven vesicle motility. This is Kinectin (KTN1) from Gallus gallus (Chicken).